We begin with the raw amino-acid sequence, 679 residues long: Glycine--tRNA ligase beta subunit (679 aa).

The protein belongs to the class-II aminoacyl-tRNA synthetase family. As to quaternary structure, tetramer of two alpha and two beta subunits.

It localises to the cytoplasm. The enzyme catalyses tRNA(Gly) + glycine + ATP = glycyl-tRNA(Gly) + AMP + diphosphate. In Streptococcus agalactiae serotype Ia (strain ATCC 27591 / A909 / CDC SS700), this protein is Glycine--tRNA ligase beta subunit.